We begin with the raw amino-acid sequence, 601 residues long: Elongation factor 4 (601 aa).

The region spanning K6–D188 is the tr-type G domain. GTP contacts are provided by residues D18–T23 and N135–D138.

It belongs to the TRAFAC class translation factor GTPase superfamily. Classic translation factor GTPase family. LepA subfamily.

The protein resides in the cell membrane. The enzyme catalyses GTP + H2O = GDP + phosphate + H(+). In terms of biological role, required for accurate and efficient protein synthesis under certain stress conditions. May act as a fidelity factor of the translation reaction, by catalyzing a one-codon backward translocation of tRNAs on improperly translocated ribosomes. Back-translocation proceeds from a post-translocation (POST) complex to a pre-translocation (PRE) complex, thus giving elongation factor G a second chance to translocate the tRNAs correctly. Binds to ribosomes in a GTP-dependent manner. In Buchnera aphidicola subsp. Schizaphis graminum (strain Sg), this protein is Elongation factor 4.